The chain runs to 396 residues: Alanine racemase (396 aa).

Catalysis depends on K46, which acts as the Proton acceptor; specific for D-alanine. K46 is modified (N6-(pyridoxal phosphate)lysine). R145 contacts substrate. Y280 acts as the Proton acceptor; specific for L-alanine in catalysis. A substrate-binding site is contributed by M328.

The protein belongs to the alanine racemase family. Requires pyridoxal 5'-phosphate as cofactor.

The catalysed reaction is L-alanine = D-alanine. It participates in amino-acid biosynthesis; D-alanine biosynthesis; D-alanine from L-alanine: step 1/1. Its function is as follows. Catalyzes the interconversion of L-alanine and D-alanine. May also act on other amino acids. The polypeptide is Alanine racemase (alr) (Brucella suis (strain ATCC 23445 / NCTC 10510)).